The chain runs to 211 residues: Imidazole glycerol phosphate synthase subunit HisH (211 aa).

Residues 3 to 211 (VVAVIDYEMG…VSQVREKIAA (209 aa)) enclose the Glutamine amidotransferase type-1 domain. Residue Cys81 is the Nucleophile of the active site. Active-site residues include His186 and Glu188.

Heterodimer of HisH and HisF.

It localises to the cytoplasm. The catalysed reaction is 5-[(5-phospho-1-deoxy-D-ribulos-1-ylimino)methylamino]-1-(5-phospho-beta-D-ribosyl)imidazole-4-carboxamide + L-glutamine = D-erythro-1-(imidazol-4-yl)glycerol 3-phosphate + 5-amino-1-(5-phospho-beta-D-ribosyl)imidazole-4-carboxamide + L-glutamate + H(+). The enzyme catalyses L-glutamine + H2O = L-glutamate + NH4(+). The protein operates within amino-acid biosynthesis; L-histidine biosynthesis; L-histidine from 5-phospho-alpha-D-ribose 1-diphosphate: step 5/9. In terms of biological role, IGPS catalyzes the conversion of PRFAR and glutamine to IGP, AICAR and glutamate. The HisH subunit catalyzes the hydrolysis of glutamine to glutamate and ammonia as part of the synthesis of IGP and AICAR. The resulting ammonia molecule is channeled to the active site of HisF. This Trichormus variabilis (strain ATCC 29413 / PCC 7937) (Anabaena variabilis) protein is Imidazole glycerol phosphate synthase subunit HisH.